Here is a 99-residue protein sequence, read N- to C-terminus: uncharacterized protein (99 aa).

A signal peptide spans 1–19 (MLGMIRWVVEGTLVAMLLS). The tract at residues 71 to 99 (DGFGRINDSGPKRRGRDQSQYSSRFVELD) is disordered.

The protein localises to the cytoplasm. This is an uncharacterized protein from Saccharomyces cerevisiae (strain ATCC 204508 / S288c) (Baker's yeast).